Reading from the N-terminus, the 246-residue chain is Probable transcriptional regulatory protein YebC (246 aa).

Residues 1–20 are disordered; that stretch reads MAGHSKWANTRHRKAAQDAK.

Belongs to the TACO1 family.

It is found in the cytoplasm. The chain is Probable transcriptional regulatory protein YebC from Shigella flexneri.